Consider the following 150-residue polypeptide: Globin-2 (150 aa).

Residues 11-150 form the Globin domain; sequence PLSDAEKNKI…MICILLSSAY (140 aa). Residues His-74 and His-106 each contribute to the heme b site.

The protein belongs to the globin family. As to quaternary structure, monomer.

The protein is Globin-2 of Mordacia mordax (Southern hemisphere lamprey).